The primary structure comprises 240 residues: Caffeoyl-CoA O-methyltransferase 5 (240 aa).

Lys-14 is a binding site for substrate. S-adenosyl-L-methionine is bound by residues Thr-56, Glu-78, Gly-80–Val-81, Ser-86, Asp-104, and Ala-133. Asp-156 contacts substrate. Asp-156 is an a divalent metal cation binding site. Residue Asp-158 coordinates S-adenosyl-L-methionine. Residues Asp-182 and Asn-183 each coordinate a divalent metal cation. Residue Asn-187 coordinates substrate.

The protein belongs to the class I-like SAM-binding methyltransferase superfamily. Cation-dependent O-methyltransferase family. CCoAMT subfamily. It depends on Mg(2+) as a cofactor. In terms of tissue distribution, expression steadily increases from the bottom to the top of the plant.

It carries out the reaction (E)-caffeoyl-CoA + S-adenosyl-L-methionine = (E)-feruloyl-CoA + S-adenosyl-L-homocysteine + H(+). It participates in aromatic compound metabolism; phenylpropanoid biosynthesis. Methylates caffeoyl-CoA to feruloyl-CoA and 5-hydroxyferuloyl-CoA to sinapoyl-CoA. Plays a role in the synthesis of feruloylated polysaccharides. Involved in the reinforcement of the plant cell wall. Also involved in the responding to wounding or pathogen challenge by the increased formation of cell wall-bound ferulic acid polymers. Methylates 5-hydroxyferulolyl-CoA more efficiently than caffeoyl-CoA. The chain is Caffeoyl-CoA O-methyltransferase 5 (CCOAOMT5) from Nicotiana tabacum (Common tobacco).